The primary structure comprises 375 residues: Queuine tRNA-ribosyltransferase (375 aa).

Residue Asp-90 is the Proton acceptor of the active site. Substrate-binding positions include 90 to 94, Asp-144, Gln-190, and Gly-217; that span reads DSGGF. Residues 248 to 254 are RNA binding; sequence GIGTPHY. Catalysis depends on Asp-267, which acts as the Nucleophile. The segment at 272–276 is RNA binding; important for wobble base 34 recognition; it reads ARITR. Positions 305, 307, 310, and 336 each coordinate Zn(2+).

It belongs to the queuine tRNA-ribosyltransferase family. Homodimer. Within each dimer, one monomer is responsible for RNA recognition and catalysis, while the other monomer binds to the replacement base PreQ1. Requires Zn(2+) as cofactor.

The enzyme catalyses 7-aminomethyl-7-carbaguanine + guanosine(34) in tRNA = 7-aminomethyl-7-carbaguanosine(34) in tRNA + guanine. The protein operates within tRNA modification; tRNA-queuosine biosynthesis. In terms of biological role, catalyzes the base-exchange of a guanine (G) residue with the queuine precursor 7-aminomethyl-7-deazaguanine (PreQ1) at position 34 (anticodon wobble position) in tRNAs with GU(N) anticodons (tRNA-Asp, -Asn, -His and -Tyr). Catalysis occurs through a double-displacement mechanism. The nucleophile active site attacks the C1' of nucleotide 34 to detach the guanine base from the RNA, forming a covalent enzyme-RNA intermediate. The proton acceptor active site deprotonates the incoming PreQ1, allowing a nucleophilic attack on the C1' of the ribose to form the product. After dissociation, two additional enzymatic reactions on the tRNA convert PreQ1 to queuine (Q), resulting in the hypermodified nucleoside queuosine (7-(((4,5-cis-dihydroxy-2-cyclopenten-1-yl)amino)methyl)-7-deazaguanosine). This is Queuine tRNA-ribosyltransferase from Borreliella burgdorferi (strain ZS7) (Borrelia burgdorferi).